The following is a 597-amino-acid chain: Probable methyltransferase-like protein 25 (597 aa).

The span at 245–254 (ECKGDAESVQ) shows a compositional bias: basic and acidic residues. Disordered regions lie at residues 245–265 (ECKG…DLSA) and 317–342 (TSSQ…KARD). Residues 317–326 (TSSQVQNTEK) are compositionally biased toward polar residues.

Its function is as follows. Probable methyltransferase. This chain is Probable methyltransferase-like protein 25 (Mettl25), found in Mus musculus (Mouse).